The following is a 398-amino-acid chain: Selection and upkeep of intraepithelial T-cells protein 8 (398 aa).

The signal sequence occupies residues 1 to 25 (MMKPEFSHFFGFCVYFLFLQVMASS). In terms of domain architecture, Ig-like V-type spans 26 to 141 (EKLRVTTPTR…DVAIMNLNVT (116 aa)). The Extracellular segment spans residues 26-244 (EKLRVTTPTR…ANELFNQDYL (219 aa)). C49 and C123 form a disulfide bridge. 2 N-linked (GlcNAc...) asparagine glycosylation sites follow: N92 and N139. An Ig-like C1-type domain is found at 142–233 (AVGLETEIHV…TGEEKQTSII (92 aa)). An intrachain disulfide couples C163 to C217. The chain crosses the membrane as a helical span at residues 245 to 265 (WVGIFPFSVLSLILFGVLPFI). Topologically, residues 266 to 288 (NSFFRSQGCASGCLSKCLPVVTS) are cytoplasmic. Residues 289–309 (WPVQIVHFLVCSGVLFAVYLP) traverse the membrane as a helical segment. Residues 310 to 331 (HRYRVSLSDPQFPLYNNWITEL) lie on the Extracellular side of the membrane. A helical transmembrane segment spans residues 332-352 (LIVILFLTICFVLPITVLLLI). At 353–398 (KLSPTCLAKWEKNKDDIMDSQLGLGKAREASTLYEEQSRKSWEQEK) the chain is on the cytoplasmic side.

This sequence belongs to the SKINT family. As to expression, expressed in skin, thymus, testis and, to a lower extent, bladder, brain, heart, kidney, mammary gland, small intestine and uterus.

It localises to the membrane. Its function is as follows. May act by engaging a cell surface molecule on immature T-cells in the embryonic thymus. The chain is Selection and upkeep of intraepithelial T-cells protein 8 (Skint8) from Mus musculus (Mouse).